Reading from the N-terminus, the 329-residue chain is Mitochondrial nuclease (329 aa).

The active-site Proton acceptor is histidine 138. Asparagine 170 is a Mg(2+) binding site.

The protein belongs to the DNA/RNA non-specific endonuclease family. As to quaternary structure, homodimer. It depends on Mn(2+) as a cofactor. Mg(2+) is required as a cofactor.

Its subcellular location is the mitochondrion inner membrane. Functionally, this enzyme has both RNase and DNase activity. In Saccharomyces cerevisiae (strain ATCC 204508 / S288c) (Baker's yeast), this protein is Mitochondrial nuclease (NUC1).